The sequence spans 141 residues: Succinate dehydrogenase [ubiquinone] cytochrome b small subunit 2 (141 aa).

The transit peptide at 1–24 (MSLIRCTTSKALKFRQLLKMAART) directs the protein to the mitochondrion. The Mitochondrial matrix portion of the chain corresponds to 25 to 44 (SVTTPVSREPFSIEDHSLHF). Residues 45–63 (KIERYWAAGMIPLIPTAYF) form a helical membrane-spanning segment. The Mitochondrial intermembrane segment spans residues 64 to 68 (IHTPA). Residues 69–89 (MDAVLTVAIVLHVHWGIAGVV) traverse the membrane as a helical segment. His-80 contacts heme b. At 90–104 (SDYARPFVIGDTLAR) the chain is on the mitochondrial matrix side. Position 92 (Tyr-92) interacts with a ubiquinone. The helical transmembrane segment at 105–126 (VARASVYIITVILLASLLHFNN) threads the bilayer. The Mitochondrial intermembrane segment spans residues 127 to 141 (SDVGLTKAFEMVWSL).

Belongs to the CybS family. Component of the mitochondrial electron transport chain complex II composed of four subunits: a flavoprotein (Fp), an iron-sulfur protein (Ip), and a large cytochrome b (CybL) subunit and a small cytochrome b (CybS) subunit. There are 2 developmental stage-specific forms of complex II which have the Ip and CybL subunits in common. Complex II from the free-living larvae (aerobic environment) acts as a succinate dehydrogenase and is composed of the common subunit Ip and CybL and the stage specific subunits FpL and CybSL. Complex II from parasitic larvae and adults (anaerobic environment) acts as a fumarate reductase and is composed of the common subunit Ip and CybL and the stage specific subunits FpA and CybSA. The cofactor is heme b.

Its subcellular location is the mitochondrion inner membrane. The protein operates within carbohydrate metabolism; tricarboxylic acid cycle; fumarate from succinate (eukaryal route): step 1/1. In terms of biological role, membrane-bound small subunit (CybS) of the mitochondrial electron transport chain complex II, which together with the membrane-bound large subunit (CybL), anchor the catalytic subunits to the inner mitochondria membrane. During the free-living egg-larvae stages, which occur in an aerobic environment, complex II acts as a succinate dehydrogenase by transferring electrons from succinate to ubiquinone. The protein is Succinate dehydrogenase [ubiquinone] cytochrome b small subunit 2 of Ascaris suum (Pig roundworm).